A 359-amino-acid chain; its full sequence is Small ribosomal subunit biogenesis GTPase RsgA (359 aa).

Residues 101-259 (KRKGSQAIAS…LMDNPGIREV (159 aa)) enclose the CP-type G domain. GTP contacts are provided by residues 149–152 (NKKD) and 201–209 (GSSGAGKST). Positions 284, 289, 291, and 297 each coordinate Zn(2+). Residues 331–359 (DPEEARKKKQKDKQMSKALQKRLKDKGRK) are disordered. Basic residues predominate over residues 349–359 (LQKRLKDKGRK).

Belongs to the TRAFAC class YlqF/YawG GTPase family. RsgA subfamily. As to quaternary structure, monomer. Associates with 30S ribosomal subunit, binds 16S rRNA. Zn(2+) is required as a cofactor.

The protein localises to the cytoplasm. In terms of biological role, one of several proteins that assist in the late maturation steps of the functional core of the 30S ribosomal subunit. Helps release RbfA from mature subunits. May play a role in the assembly of ribosomal proteins into the subunit. Circularly permuted GTPase that catalyzes slow GTP hydrolysis, GTPase activity is stimulated by the 30S ribosomal subunit. The sequence is that of Small ribosomal subunit biogenesis GTPase RsgA from Leptospira interrogans serogroup Icterohaemorrhagiae serovar copenhageni (strain Fiocruz L1-130).